Consider the following 247-residue polypeptide: 23S rRNA (guanosine-2'-O-)-methyltransferase RlmB (247 aa).

Residues G197, I217, and L226 each contribute to the S-adenosyl-L-methionine site.

The protein belongs to the class IV-like SAM-binding methyltransferase superfamily. RNA methyltransferase TrmH family. RlmB subfamily.

Its subcellular location is the cytoplasm. It catalyses the reaction guanosine(2251) in 23S rRNA + S-adenosyl-L-methionine = 2'-O-methylguanosine(2251) in 23S rRNA + S-adenosyl-L-homocysteine + H(+). Functionally, specifically methylates the ribose of guanosine 2251 in 23S rRNA. The protein is 23S rRNA (guanosine-2'-O-)-methyltransferase RlmB of Vibrio vulnificus (strain CMCP6).